Consider the following 59-residue polypeptide: uncharacterized protein (59 aa).

This is an uncharacterized protein from Saccharomyces cerevisiae (strain ATCC 204508 / S288c) (Baker's yeast).